A 689-amino-acid polypeptide reads, in one-letter code: 1,4-alpha-glucan-branching enzyme (689 aa).

Positions 93 and 128 each coordinate (1,4-alpha-D-glucosyl)n. The Nucleophile role is filled by Asp345. Glu400 (proton donor) is an active-site residue.

Belongs to the glycosyl hydrolase 13 family. GlgB subfamily.

The protein localises to the cytoplasm. The catalysed reaction is Transfers a segment of a (1-&gt;4)-alpha-D-glucan chain to a primary hydroxy group in a similar glucan chain.. It participates in glycan biosynthesis; glycogen biosynthesis. Its function is as follows. Glycogen-branching enzyme participates in the glycogen biosynthetic process along with glycogenin and glycogen synthase. Generates alpha-1,6-glucosidic branches from alpha-1,4-linked glucose chains, to increase solubility of the glycogen polymer. In Aspergillus oryzae (strain ATCC 42149 / RIB 40) (Yellow koji mold), this protein is 1,4-alpha-glucan-branching enzyme (gbeA).